The primary structure comprises 495 residues: Transcription termination/antitermination protein NusA (495 aa).

One can recognise an S1 motif domain in the interval 135-200 (GKIVTGTVKK…KTAQLFVTRS (66 aa)). The region spanning 302 to 374 (NHSMDIAVEA…LDEEFAQILV (73 aa)) is the KH domain.

The protein belongs to the NusA family. Monomer. Binds directly to the core enzyme of the DNA-dependent RNA polymerase and to nascent RNA.

It is found in the cytoplasm. Functionally, participates in both transcription termination and antitermination. This chain is Transcription termination/antitermination protein NusA, found in Haemophilus influenzae (strain ATCC 51907 / DSM 11121 / KW20 / Rd).